Here is a 148-residue protein sequence, read N- to C-terminus: [Ribosomal protein bS18]-alanine N-acetyltransferase (148 aa).

Positions 2-147 (NTISILSTTD…DAIIMALPIS (146 aa)) constitute an N-acetyltransferase domain. Acetyl-CoA is bound by residues 69–71 (IAV) and 77–82 (RRGLGR). The active-site Proton acceptor is Glu-103. Asn-108 contributes to the acetyl-CoA binding site. The active-site Proton donor is Tyr-115.

The protein belongs to the acetyltransferase family. RimI subfamily.

The protein localises to the cytoplasm. The enzyme catalyses N-terminal L-alanyl-[ribosomal protein bS18] + acetyl-CoA = N-terminal N(alpha)-acetyl-L-alanyl-[ribosomal protein bS18] + CoA + H(+). Acetylates the N-terminal alanine of ribosomal protein bS18. This chain is [Ribosomal protein bS18]-alanine N-acetyltransferase, found in Salmonella typhimurium (strain LT2 / SGSC1412 / ATCC 700720).